A 622-amino-acid polypeptide reads, in one-letter code: 1-deoxy-D-xylulose-5-phosphate synthase (622 aa).

Thiamine diphosphate-binding positions include H80 and 121-123 (GHS). Residue D152 participates in Mg(2+) binding. Thiamine diphosphate contacts are provided by residues 153 to 154 (GA), N181, Y288, and E370. N181 is a Mg(2+) binding site.

This sequence belongs to the transketolase family. DXPS subfamily. As to quaternary structure, homodimer. Requires Mg(2+) as cofactor. The cofactor is thiamine diphosphate.

It carries out the reaction D-glyceraldehyde 3-phosphate + pyruvate + H(+) = 1-deoxy-D-xylulose 5-phosphate + CO2. The protein operates within metabolic intermediate biosynthesis; 1-deoxy-D-xylulose 5-phosphate biosynthesis; 1-deoxy-D-xylulose 5-phosphate from D-glyceraldehyde 3-phosphate and pyruvate: step 1/1. In terms of biological role, catalyzes the acyloin condensation reaction between C atoms 2 and 3 of pyruvate and glyceraldehyde 3-phosphate to yield 1-deoxy-D-xylulose-5-phosphate (DXP). This Hamiltonella defensa subsp. Acyrthosiphon pisum (strain 5AT) protein is 1-deoxy-D-xylulose-5-phosphate synthase.